The following is a 465-amino-acid chain: Cysteine--tRNA ligase (465 aa).

Cys27 lines the Zn(2+) pocket. Residues 29–39 (PTVYNFFHIGN) carry the 'HIGH' region motif. Zn(2+)-binding residues include Cys207, His232, and Glu236. Residues 264–268 (KMSKS) carry the 'KMSKS' region motif. An ATP-binding site is contributed by Lys267.

Belongs to the class-I aminoacyl-tRNA synthetase family. In terms of assembly, monomer. Zn(2+) is required as a cofactor.

The protein localises to the cytoplasm. The catalysed reaction is tRNA(Cys) + L-cysteine + ATP = L-cysteinyl-tRNA(Cys) + AMP + diphosphate. The chain is Cysteine--tRNA ligase from Clostridium botulinum (strain Loch Maree / Type A3).